The sequence spans 159 residues: Transcription elongation factor GreA (159 aa).

Positions 3–37 (TNKEVVLTYEGLQKLEQELENLKTVKRREVAERIK) form a coiled coil.

The protein belongs to the GreA/GreB family.

Its function is as follows. Necessary for efficient RNA polymerase transcription elongation past template-encoded arresting sites. The arresting sites in DNA have the property of trapping a certain fraction of elongating RNA polymerases that pass through, resulting in locked ternary complexes. Cleavage of the nascent transcript by cleavage factors such as GreA or GreB allows the resumption of elongation from the new 3'terminus. GreA releases sequences of 2 to 3 nucleotides. The protein is Transcription elongation factor GreA of Acetivibrio thermocellus (strain ATCC 27405 / DSM 1237 / JCM 9322 / NBRC 103400 / NCIMB 10682 / NRRL B-4536 / VPI 7372) (Clostridium thermocellum).